A 446-amino-acid chain; its full sequence is Eukaryotic translation initiation factor 3 subunit E (446 aa).

Positions 240-420 constitute a PCI domain; sequence PLFNDENSRE…GTVVMNHPNS (181 aa).

The protein belongs to the eIF-3 subunit E family. In terms of assembly, component of the eukaryotic translation initiation factor 3 (eIF-3) complex.

Its subcellular location is the cytoplasm. In terms of biological role, component of the eukaryotic translation initiation factor 3 (eIF-3) complex, which is involved in protein synthesis of a specialized repertoire of mRNAs and, together with other initiation factors, stimulates binding of mRNA and methionyl-tRNAi to the 40S ribosome. The eIF-3 complex specifically targets and initiates translation of a subset of mRNAs involved in cell proliferation. In Pyricularia oryzae (strain 70-15 / ATCC MYA-4617 / FGSC 8958) (Rice blast fungus), this protein is Eukaryotic translation initiation factor 3 subunit E.